A 321-amino-acid polypeptide reads, in one-letter code: Lipoyl synthase (321 aa).

[4Fe-4S] cluster is bound by residues C68, C73, C79, C94, C98, C101, and S308. Residues 80-297 form the Radical SAM core domain; it reads FNHGTATFMI…KEVALELGFT (218 aa).

This sequence belongs to the radical SAM superfamily. Lipoyl synthase family. [4Fe-4S] cluster is required as a cofactor.

It localises to the cytoplasm. It carries out the reaction [[Fe-S] cluster scaffold protein carrying a second [4Fe-4S](2+) cluster] + N(6)-octanoyl-L-lysyl-[protein] + 2 oxidized [2Fe-2S]-[ferredoxin] + 2 S-adenosyl-L-methionine + 4 H(+) = [[Fe-S] cluster scaffold protein] + N(6)-[(R)-dihydrolipoyl]-L-lysyl-[protein] + 4 Fe(3+) + 2 hydrogen sulfide + 2 5'-deoxyadenosine + 2 L-methionine + 2 reduced [2Fe-2S]-[ferredoxin]. It functions in the pathway protein modification; protein lipoylation via endogenous pathway; protein N(6)-(lipoyl)lysine from octanoyl-[acyl-carrier-protein]: step 2/2. Catalyzes the radical-mediated insertion of two sulfur atoms into the C-6 and C-8 positions of the octanoyl moiety bound to the lipoyl domains of lipoate-dependent enzymes, thereby converting the octanoylated domains into lipoylated derivatives. This is Lipoyl synthase from Vibrio cholerae serotype O1 (strain ATCC 39315 / El Tor Inaba N16961).